A 135-amino-acid chain; its full sequence is Small ribosomal subunit protein uS9 (135 aa).

The interval 96–135 (SADNRKPLKTEGHLSRDPRAKERRKYGLKKARKAPQFSKR) is disordered. Basic and acidic residues predominate over residues 97–115 (ADNRKPLKTEGHLSRDPRA). Basic residues predominate over residues 116–135 (KERRKYGLKKARKAPQFSKR).

This sequence belongs to the universal ribosomal protein uS9 family.

This Prochlorococcus marinus (strain MIT 9313) protein is Small ribosomal subunit protein uS9.